The primary structure comprises 438 residues: 23S rRNA (uracil(1939)-C(5))-methyltransferase RlmD (438 aa).

One can recognise a TRAM domain in the interval 13–71 (KAPLGPMQTYLVEGLTHEAKGVARLNGKVTFIEGALPGETVTAQVNKPGRRFDEAVLNA). [4Fe-4S] cluster contacts are provided by C84, C90, C93, and C167. Q271, F300, N305, E321, D348, and D368 together coordinate S-adenosyl-L-methionine. The active-site Nucleophile is C394.

It belongs to the class I-like SAM-binding methyltransferase superfamily. RNA M5U methyltransferase family. RlmD subfamily.

The enzyme catalyses uridine(1939) in 23S rRNA + S-adenosyl-L-methionine = 5-methyluridine(1939) in 23S rRNA + S-adenosyl-L-homocysteine + H(+). Catalyzes the formation of 5-methyl-uridine at position 1939 (m5U1939) in 23S rRNA. The polypeptide is 23S rRNA (uracil(1939)-C(5))-methyltransferase RlmD (Marinomonas posidonica (strain CECT 7376 / NCIMB 14433 / IVIA-Po-181)).